The primary structure comprises 592 residues: ATP-dependent RNA helicase DBP3 (592 aa).

The segment at 1-146 is disordered; sequence MGKRPIEDDA…AGSYTEHTEL (146 aa). The span at 19 to 31 shows a compositional bias: basic residues; it reads KKSKKEKSGKSKK. The segment covering 73–82 has biased composition (basic and acidic residues); it reads EAKEASKAGK. A compositionally biased stretch (basic residues) spans 97–108; the sequence is AARKAARKAEKK. A compositionally biased stretch (polar residues) spans 116 to 141; it reads TASSAPTEASSVPAQTLSSSNAGSYT. The Q motif motif lies at 179–206; sequence VNFKYLPVTDESQRAPFAGFTAPTPIQA. A Helicase ATP-binding domain is found at 209 to 382; it reads WPFLLSGRDM…STFMVSPVRI (174 aa). 222 to 229 provides a ligand contact to ATP; sequence AETGSGKT. Residues 330–333 carry the DEAD box motif; sequence DEAD. In terms of domain architecture, Helicase C-terminal spans 413 to 562; sequence RLLQLLKQYQ…EVPEELLKFG (150 aa).

It belongs to the DEAD box helicase family. DDX5/DBP2 subfamily.

It localises to the nucleus. The protein resides in the nucleolus. The enzyme catalyses ATP + H2O = ADP + phosphate + H(+). ATP-dependent RNA helicase required for 60S ribosomal subunit synthesis. Involved in efficient pre-rRNA processing, predominantly at site A3, which is necessary for the normal formation of 25S and 5.8S rRNAs. This Phaeosphaeria nodorum (strain SN15 / ATCC MYA-4574 / FGSC 10173) (Glume blotch fungus) protein is ATP-dependent RNA helicase DBP3 (DBP3).